The primary structure comprises 2090 residues: MDEVEQDQHEARLKELFDSFDTTGTGSLGQEELTDLCHMLSLEEVAPVLQQTLLQDNLLGRVHFDQFKEALILILSRTLSNEEHFQEPDCSLEAQPKYVRGGKRYGRRSLPEFQESVEEFPEVTVIEPLDEEARPSHIPAGDCSEHWKTQRSEEYEAEGQLRFWNPDDLNASQSGSSPPQDWIEEKLQEVCEDLGITRDGHLNRKKLVSICEQYGLQNVDGEMLEEVFHNLDPDGTMSVEDFFYGLFKNGKSLTPSASTPYRQLKRHLSMQSFDESGRRTTTSSAMTSTIGFRVFSCLDDGMGHASVERILDTWQEEGIENSQEILKALDFSLDGNINLTELTLALENELLVTKNSIHQAALASFKAEIRHLLERVDQVVREKEKLRSDLDKAEKLKSLMASEVDDHHAAIERRNEYNLRKLDEEYKERIAALKNELRKEREQILQQAGKQRLELEQEIEKAKTEENYIRDRLALSLKENSRLENELLENAEKLAEYENLTNKLQRNLENVLAEKFGDLDPSSAEFFLQEERLTQMRNEYERQCRVLQDQVDELQSELEEYRAQGRVLRLPLKNSPSEEVEANSGGIEPEHGLGSEECNPLNMSIEAELVIEQMKEQHHRDICCLRLELEDKVRHYEKQLDETVVSCKKAQENMKQRHENETHTLEKQISDLKNEIAELQGQAAVLKEAHHEATCRHEEEKKQLQVKLEEEKTHLQEKLRLQHEMELKARLTQAQASFEREREGLQSSAWTEEKVRGLTQELEQFHQEQLTSLVEKHTLEKEELRKELLEKHQRELQEGREKMETECNRRTSQIEAQFQSDCQKVTERCESALQSLEGRYRQELKDLQEQQREEKSQWEFEKDELTQECAEAQELLKETLKREKTTSLVLTQEREMLEKTYKEHLNSMVVERQQLLQDLEDLRNVSETQQSLLSDQILELKSSHKRELREREEVLCQAGASEQLASQRLERLEMEHDQERQEMMSKLLAMENIHKATCETADRERAEMSTEISRLQSKIKEMQQATSPLSMLQSGCQVIGEEEVEGDGALSLLQQGEQLLEENGDVLLSLQRAHEQAVKENVKMATEISRLQQRLQKLEPGLVMSSCLDEPATEFFGNTAEQTEQFLQQNRTKQVEGVTRRHVLSDLEDDEVRDLGSTGTSSVQRQEVKIEESEASVEGFSELENSEETRTESWELKNQISQLQEQLMMLCADCDRASEKKQDLLFDVSVLKKKLKMLERIPEASPKYKLLYEDVSRENDCLQEELRMMETRYDEALENNKELTAEVFRLQDELKKMEEVTETFLSLEKSYDEVKIENEGLNVLVLRLQGKIEKLQESVVQRCDCCLWEASLENLEIEPDGNILQLNQTLEECVPRVRSVHHVIEECKQENQYLEGNTQLLEKVKAHEIAWLHGTIQTHQERPRVQNQVILEENTTLLGFQDKHFQHQATIAELELEKTKLQELTRKLKERVTILVKQKDVLSHGEKEEELKAMMHDLQITCSEMQQKVELLRYESEKLQQENSILRNEITTLNEEDSISNLKLGTLNGSQEEMWQKTETVKQENAAVQKMVENLKKQISELKIKNQQLDLENTELSQKNSQNQEKLQELNQRLTEMLCQKEKEPGNSALEEREQEKFNLKEELERCKVQSSTLVSSLEAELSEVKIQTHIVQQENHLLKDELEKMKQLHRCPDLSDFQQKISSVLSYNEKLLKEKEALSEELNSCVDKLAKSSLLEHRIATMKQEQKSWEHQSASLKSQLVASQEKVQNLEDTVQNVNLQMSRMKSDLRVTQQEKEALKQEVMSLHKQLQNAGGKSWAPEIATHPSGLHNQQKRLSWDKLDHLMNEEQQLLWQENERLQTMVQNTKAELTHSREKVRQLESNLLPKHQKHLNPSGTMNPTEQEKLSLKRECDQFQKEQSPANRKVSQMNSLEQELETIHLENEGLKKKQVKLDEQLMEMQHLRSTATPSPSPHAWDLQLLQQQACPMVPREQFLQLQRQLLQAERINQHLQEELENRTSETNTPQGNQEQLVTVMEERMIEVEQKLKLVKRLLQEKVNQLKEQVSLPGHLCSPTSHSSFNSSFTSLYCH.

EF-hand domains follow at residues 8–43 (QHEA…LSLE) and 42–77 (LEEV…ILSR). Ser152 is modified (phosphoserine). 2 consecutive EF-hand domains span residues 182-217 (WIEE…YGLQ) and 219-252 (VDGE…NGKS). 245 to 252 (GLFKNGKS) provides a ligand contact to GTP. Position 269 is a phosphoserine (Ser269). Position 300–304 (300–304 (DGMGH)) interacts with GTP. The EF-hand 5 domain maps to 317–352 (EGIENSQEILKALDFSLDGNINLTELTLALENELLV). Residues 357 to 570 (IHQAALASFK…YRAQGRVLRL (214 aa)) adopt a coiled-coil conformation. 420-423 (RKLD) is a GTP binding site. Residues 574–595 (NSPSEEVEANSGGIEPEHGLGS) form a disordered region. Coiled coils occupy residues 625–1027 (LRLE…QATS), 1068–1099 (LSLQ…QKLE), 1181–1341 (SELE…SVVQ), and 1441–1816 (QDKH…AGGK). Residues 802 to 1505 (KMETECNRRT…HDLQITCSEM (704 aa)) are important for interaction with CEP170. The tract at residues 1152 to 1190 (VRDLGSTGTSSVQRQEVKIEESEASVEGFSELENSEETR) is disordered. Ser1550 and Ser1837 each carry phosphoserine. 2 coiled-coil regions span residues 1854 to 1885 (QENE…SNLL) and 1922 to 2067 (ANRK…QVSL).

As to quaternary structure, homooligomer. Interacts with GSK3B/GSK3-beta via its C-terminal domain. Interacts with C14ORF166, such interaction may prevent its phosphorylation by GSK3B. Interacts with AUNIP (via N-terminus). Identified in a complex with AUNIP and AURKA. Interacts with CCDC120. Interacts (via C-terminus) with CEP250. Interacts with CEP170. Interacts with the gamma-tubulin ring complex component TUBGCP3. Interacts with gamma-tubulin. Isoform 6 does not interact with CEP170 or CEP250. In terms of processing, phosphorylated by AURKA/Aurora kinase A and PKA kinases but not CK2 or AURKB/ Aurora kinase B. As to expression, ubiquitous. Highly expressed in heart and skeletal muscle. Isoform 1 is more expressed than isoform 5.

It is found in the cytoplasm. The protein localises to the cytoskeleton. Its subcellular location is the microtubule organizing center. It localises to the centrosome. The protein resides in the centriole. Its function is as follows. Centrosomal protein required in the positioning and anchorage of the microtubule minus-end in epithelial cells. May also act as a centrosome maturation factor. May play a role in microtubule nucleation, by recruiting the gamma-tubulin ring complex to the centrosome. Overexpression does not perturb nucleation or elongation of microtubules but suppresses release of microtubules. Required for centriole organization and microtubule anchoring at the mother centriole. The polypeptide is Ninein (NIN) (Homo sapiens (Human)).